The chain runs to 657 residues: UvrABC system protein B (657 aa).

The 139-residue stretch at 25–163 folds into the Helicase ATP-binding domain; that stretch reads ASIKNGNKYQ…QGMVLFLEIN (139 aa). 38-45 provides a ligand contact to ATP; sequence GVTGSGKT. The Beta-hairpin signature appears at 91-114; it reads YYDYYQPEAYIPRQDLFIEKDSSI. Residues 130–133 carry the DEAD box motif; sequence LSFD. One can recognise a Helicase C-terminal domain in the interval 433–599; sequence QVEILYDMAK…SVSRNVEESL (167 aa). The UVR domain maps to 622 to 657; it reads AKIVKDLRKQMMEAADKLEFEKAAALRDEIKKMRKL.

Belongs to the UvrB family. Forms a heterotetramer with UvrA during the search for lesions. Interacts with UvrC in an incision complex.

The protein resides in the cytoplasm. In terms of biological role, the UvrABC repair system catalyzes the recognition and processing of DNA lesions. A damage recognition complex composed of 2 UvrA and 2 UvrB subunits scans DNA for abnormalities. Upon binding of the UvrA(2)B(2) complex to a putative damaged site, the DNA wraps around one UvrB monomer. DNA wrap is dependent on ATP binding by UvrB and probably causes local melting of the DNA helix, facilitating insertion of UvrB beta-hairpin between the DNA strands. Then UvrB probes one DNA strand for the presence of a lesion. If a lesion is found the UvrA subunits dissociate and the UvrB-DNA preincision complex is formed. This complex is subsequently bound by UvrC and the second UvrB is released. If no lesion is found, the DNA wraps around the other UvrB subunit that will check the other stand for damage. The sequence is that of UvrABC system protein B from Campylobacter hominis (strain ATCC BAA-381 / DSM 21671 / CCUG 45161 / LMG 19568 / NCTC 13146 / CH001A).